Reading from the N-terminus, the 334-residue chain is GTP 3',8-cyclase (334 aa).

The region spanning 11–236 (GFNRKIDYLR…ESTESSMGPA (226 aa)) is the Radical SAM core domain. Arginine 20 contributes to the GTP binding site. [4Fe-4S] cluster is bound by residues cysteine 27 and cysteine 31. Tyrosine 33 lines the S-adenosyl-L-methionine pocket. Cysteine 34 contributes to the [4Fe-4S] cluster binding site. Arginine 69 provides a ligand contact to GTP. An S-adenosyl-L-methionine-binding site is contributed by glycine 73. Position 100 (threonine 100) interacts with GTP. Residue serine 124 participates in S-adenosyl-L-methionine binding. Lysine 161 contacts GTP. Residue methionine 195 coordinates S-adenosyl-L-methionine. Cysteine 260 and cysteine 263 together coordinate [4Fe-4S] cluster. Residue 265 to 267 (RVR) coordinates GTP. Cysteine 277 is a [4Fe-4S] cluster binding site.

The protein belongs to the radical SAM superfamily. MoaA family. Monomer and homodimer. The cofactor is [4Fe-4S] cluster.

The enzyme catalyses GTP + AH2 + S-adenosyl-L-methionine = (8S)-3',8-cyclo-7,8-dihydroguanosine 5'-triphosphate + 5'-deoxyadenosine + L-methionine + A + H(+). It participates in cofactor biosynthesis; molybdopterin biosynthesis. In terms of biological role, catalyzes the cyclization of GTP to (8S)-3',8-cyclo-7,8-dihydroguanosine 5'-triphosphate. This Pseudomonas putida (strain ATCC 47054 / DSM 6125 / CFBP 8728 / NCIMB 11950 / KT2440) protein is GTP 3',8-cyclase.